Reading from the N-terminus, the 198-residue chain is 7-methyl-GTP pyrophosphatase (198 aa).

The active-site Proton acceptor is the Asp69.

The protein belongs to the Maf family. YceF subfamily. The cofactor is a divalent metal cation.

The protein localises to the cytoplasm. The catalysed reaction is N(7)-methyl-GTP + H2O = N(7)-methyl-GMP + diphosphate + H(+). Nucleoside triphosphate pyrophosphatase that hydrolyzes 7-methyl-GTP (m(7)GTP). May have a dual role in cell division arrest and in preventing the incorporation of modified nucleotides into cellular nucleic acids. The polypeptide is 7-methyl-GTP pyrophosphatase (Yersinia pseudotuberculosis serotype I (strain IP32953)).